Here is a 130-residue protein sequence, read N- to C-terminus: Protein ApaG (130 aa).

One can recognise an ApaG domain in the interval 3-127; the sequence is EHESCGVRIS…FSLDRPSDRL (125 aa).

The polypeptide is Protein ApaG (Maricaulis maris (strain MCS10) (Caulobacter maris)).